The following is a 505-amino-acid chain: Probable alpha-L-arabinofuranosidase C (505 aa).

4 N-linked (GlcNAc...) asparagine glycosylation sites follow: Asn-81, Asn-152, Asn-269, and Asn-438.

Belongs to the glycosyl hydrolase 51 family.

The protein resides in the secreted. It carries out the reaction Hydrolysis of terminal non-reducing alpha-L-arabinofuranoside residues in alpha-L-arabinosides.. The protein operates within glycan metabolism; L-arabinan degradation. Functionally, alpha-L-arabinofuranosidase involved in the degradation of arabinoxylan, a major component of plant hemicellulose. Acts only on small linear 1,5-alpha-linked L-arabinofuranosyl oligosaccharides. The chain is Probable alpha-L-arabinofuranosidase C (abfC) from Aspergillus fumigatus (strain ATCC MYA-4609 / CBS 101355 / FGSC A1100 / Af293) (Neosartorya fumigata).